The sequence spans 216 residues: Cytochrome c biogenesis ATP-binding export protein CcmA (216 aa).

The 206-residue stretch at 11-216 (VSASKLTCIR…RKIRLDYRFV (206 aa)) folds into the ABC transporter domain. 43 to 50 (GPNGAGKT) is an ATP binding site.

Belongs to the ABC transporter superfamily. CcmA exporter (TC 3.A.1.107) family. The complex is composed of two ATP-binding proteins (CcmA) and two transmembrane proteins (CcmB).

It localises to the cell inner membrane. The catalysed reaction is heme b(in) + ATP + H2O = heme b(out) + ADP + phosphate + H(+). Part of the ABC transporter complex CcmAB involved in the biogenesis of c-type cytochromes; once thought to export heme, this seems not to be the case, but its exact role is uncertain. Responsible for energy coupling to the transport system. The polypeptide is Cytochrome c biogenesis ATP-binding export protein CcmA (Shewanella sp. (strain MR-7)).